Here is a 224-residue protein sequence, read N- to C-terminus: Flagellar L-ring protein (224 aa).

Residues 1 to 15 form the signal peptide; that stretch reads MARYFILAVALLLTA. The N-palmitoyl cysteine moiety is linked to residue cysteine 16. Residue cysteine 16 is the site of S-diacylglycerol cysteine attachment.

This sequence belongs to the FlgH family. The basal body constitutes a major portion of the flagellar organelle and consists of four rings (L,P,S, and M) mounted on a central rod.

Its subcellular location is the cell outer membrane. It localises to the bacterial flagellum basal body. Its function is as follows. Assembles around the rod to form the L-ring and probably protects the motor/basal body from shearing forces during rotation. The polypeptide is Flagellar L-ring protein (Shewanella sp. (strain MR-7)).